The chain runs to 852 residues: Lon protease homolog 2, peroxisomal (852 aa).

Serine 2 is modified (N-acetylserine). The Lon N-terminal domain maps to 13 to 222 (LPLLLTHEGV…MTIPLLVRQI (210 aa)). 375–382 (GPPGVGKT) is a binding site for ATP. A Lon proteolytic domain is found at 651–837 (LSQPGVAIGL…DEVLNAAFDG (187 aa)). Active-site residues include serine 743 and lysine 786. The short motif at 850-852 (SKL) is the Microbody targeting signal element.

This sequence belongs to the peptidase S16 family. In terms of assembly, interacts with PEX5. Interacts with TYSND1. May interact with enzymes involved in beta-oxidation of fatty acids, including ACOX1/AOX.

It is found in the peroxisome matrix. It catalyses the reaction Hydrolysis of proteins in presence of ATP.. Functionally, ATP-dependent serine protease that mediates the selective degradation of misfolded and unassembled polypeptides in the peroxisomal matrix. Necessary for type 2 peroxisome targeting signal (PTS2)-containing protein processing and facilitates peroxisome matrix protein import. May indirectly regulate peroxisomal fatty acid beta-oxidation through degradation of the self-processed forms of TYSND1. This is Lon protease homolog 2, peroxisomal from Pongo abelii (Sumatran orangutan).